Here is an 85-residue protein sequence, read N- to C-terminus: uncharacterized protein (85 aa).

The N-terminal stretch at 1-19 is a signal peptide; it reads MKTIFTVGAVVLATCLLSG. C20 carries the N-palmitoyl cysteine lipid modification. C20 carries S-diacylglycerol cysteine lipidation.

Its subcellular location is the cell outer membrane. This is an uncharacterized protein from Escherichia coli (strain K12).